The sequence spans 71 residues: MNQGKVWRVVKPTVGVPVYLGAVAVTALILHGGLLAKTDWFGAYWNGGKKAAAAAAAVAPAPVAAPQAPAQ.

At 1–15 (MNQGKVWRVVKPTVG) the chain is on the cytoplasmic side. The chain crosses the membrane as a helical span at residues 16–36 (VPVYLGAVAVTALILHGGLLA). His-31 contacts a bacteriochlorophyll. Over 37–50 (KTDWFGAYWNGGKK) the chain is Periplasmic. Residues 51–71 (AAAAAAAVAPAPVAAPQAPAQ) form a helical membrane-spanning segment.

Belongs to the antenna complex alpha subunit family. As to quaternary structure, an alpha/beta heterodimer conjugated to 3 bacteriochlorophyll molecules. The core complex is formed by different alpha and beta chains, binding bacteriochlorophyll molecules, and arranged most probably in tetrameric structures disposed around the reaction center. The non-pigmented gamma chains may constitute additional components.

The protein localises to the cell membrane. Functionally, antenna complexes are light-harvesting systems, which transfer the excitation energy to the reaction centers. The sequence is that of Light-harvesting protein B-800/850 alpha chain (pucA) from Rubrivivax gelatinosus (Rhodocyclus gelatinosus).